The primary structure comprises 773 residues: Membrane-bound aldehyde dehydrogenase [pyrroloquinoline-quinone] (773 aa).

The segment at residues 1-44 (MGRLNRFRLGKDGRREQASLSRRGFLVTSLGAGVMFGFARPSSA) is a signal peptide (tat-type signal).

It depends on pyrroloquinoline quinone as a cofactor. Post-translationally, predicted to be exported by the Tat system. The position of the signal peptide cleavage has been experimentally proven.

It localises to the cell inner membrane. It carries out the reaction an aldehyde + a quinone + H2O = a quinol + a carboxylate + H(+). The protein is Membrane-bound aldehyde dehydrogenase [pyrroloquinoline-quinone] of Gluconacetobacter polyoxogenes (Acetobacter polyoxogenes).